A 389-amino-acid polypeptide reads, in one-letter code: Probable family 17 glucosidase SCW10 (389 aa).

Positions 1-18 are cleaved as a signal peptide; sequence MRFSNFLTVSALLTGALG. A propeptide spanning residues 19 to 29 is cleaved from the precursor; it reads APAVRHKHEKR. Positions 70 to 134 are disordered; it reads ASQATTSTLE…SSASSSISAS (65 aa). N279 carries N-linked (GlcNAc...) asparagine glycosylation. E326 serves as the catalytic Nucleophile.

This sequence belongs to the glycosyl hydrolase 17 family. Post-translationally, glycosylated.

It localises to the secreted. The protein resides in the cell wall. Glucanases possibly play a role in cell expansion during growth, in cell-cell fusion during mating, and in spore release during sporulation. The polypeptide is Probable family 17 glucosidase SCW10 (SCW10) (Saccharomyces cerevisiae (strain ATCC 204508 / S288c) (Baker's yeast)).